The primary structure comprises 272 residues: ATP synthase subunit a (272 aa).

Transmembrane regions (helical) follow at residues 42 to 62 (IDSL…AGFV), 108 to 128 (FVWI…LPCI), 140 to 162 (ILPS…LMIF), 177 to 197 (LIYH…LEII), 219 to 239 (LIFI…LSVP), and 241 to 261 (AIFH…LTII).

Belongs to the ATPase A chain family. F-type ATPases have 2 components, CF(1) - the catalytic core - and CF(0) - the membrane proton channel. CF(1) has five subunits: alpha(3), beta(3), gamma(1), delta(1), epsilon(1). CF(0) has three main subunits: a(1), b(2) and c(9-12). The alpha and beta chains form an alternating ring which encloses part of the gamma chain. CF(1) is attached to CF(0) by a central stalk formed by the gamma and epsilon chains, while a peripheral stalk is formed by the delta and b chains.

It is found in the cell inner membrane. In terms of biological role, key component of the proton channel; it plays a direct role in the translocation of protons across the membrane. In Blochmanniella floridana, this protein is ATP synthase subunit a.